The chain runs to 197 residues: Imidazoleglycerol-phosphate dehydratase (197 aa).

It belongs to the imidazoleglycerol-phosphate dehydratase family.

It is found in the cytoplasm. The enzyme catalyses D-erythro-1-(imidazol-4-yl)glycerol 3-phosphate = 3-(imidazol-4-yl)-2-oxopropyl phosphate + H2O. The protein operates within amino-acid biosynthesis; L-histidine biosynthesis; L-histidine from 5-phospho-alpha-D-ribose 1-diphosphate: step 6/9. This Nitrosomonas europaea (strain ATCC 19718 / CIP 103999 / KCTC 2705 / NBRC 14298) protein is Imidazoleglycerol-phosphate dehydratase.